The primary structure comprises 600 residues: Integrator complex subunit 11 (600 aa).

His68, His70, Asp72, His73, His157, and Asp178 together coordinate Zn(2+). Positions 68 to 73 match the HXHXDH motif motif; it reads HFHLDH. The active site involves Glu203. A Zn(2+)-binding site is contributed by His414. Positions 469 to 479 match the Nuclear localization signal motif; that stretch reads LLPDAKKPKLM.

The protein belongs to the metallo-beta-lactamase superfamily. RNA-metabolizing metallo-beta-lactamase-like family. INTS11 subfamily. In terms of assembly, component of the Integrator complex, composed of core subunits INTS1, INTS2, INTS3, INTS4, INTS5, INTS6, INTS7, INTS8, INTS9/RC74, INTS10, INTS11/CPSF3L, INTS12, INTS13, INTS14 and INTS15. The core complex associates with protein phosphatase 2A subunits PPP2CA and PPP2R1A, to form the Integrator-PP2A (INTAC) complex. INTS11 is part of the RNA endonuclease subcomplex, composed of INTS4, INTS9, INTS11 and inositol hexakisphosphate (InsP6). The cofactor is Zn(2+).

Its subcellular location is the nucleus. It localises to the cytoplasm. RNA endonuclease component of the integrator complex, a multiprotein complex that terminates RNA polymerase II (Pol II) transcription in the promoter-proximal region of genes. The integrator complex provides a quality checkpoint during transcription elongation by driving premature transcription termination of transcripts that are unfavorably configured for transcriptional elongation: the complex terminates transcription by (1) catalyzing dephosphorylation of the C-terminal domain (CTD) of Pol II subunit POLR2A/RPB1 and SUPT5H/SPT5, (2) degrading the exiting nascent RNA transcript via endonuclease activity and (3) promoting the release of Pol II from bound DNA. The integrator complex is also involved in terminating the synthesis of non-coding Pol II transcripts, such as enhancer RNAs (eRNAs), small nuclear RNAs (snRNAs), telomerase RNAs and long non-coding RNAs (lncRNAs). Within the integrator complex, INTS11 constitutes the RNA endonuclease subunit that degrades exiting nascent RNA transcripts. The chain is Integrator complex subunit 11 (INTS11) from Gallus gallus (Chicken).